Consider the following 769-residue polypeptide: 4-hydroxybenzoyl-CoA reductase subunit alpha (769 aa).

Mo-molybdopterin cytosine dinucleotide is bound by residues Gln214, 244 to 245 (GF), 522 to 526 (SSRVT), 650 to 655 (VGKALN), and 722 to 725 (KEAS).

The protein belongs to the xanthine dehydrogenase family. In terms of assembly, heterohexamer of two alpha, two beta and two gamma subunits. Mo-molybdopterin cytosine dinucleotide is required as a cofactor. Post-translationally, the N-terminus is blocked.

It carries out the reaction oxidized 2[4Fe-4S]-[ferredoxin] + benzoyl-CoA + H2O = 4-hydroxybenzoyl-CoA + reduced 2[4Fe-4S]-[ferredoxin] + 2 H(+). Inactivated by low concentrations of cyanide in vitro. In terms of biological role, component of a complex that catalyzes the reductive dehydroxylation of 4-hydroxybenzoyl-CoA to benzoyl-CoA. Reaction is not reversible. Is a key enzyme in the anaerobic degradation of phenolic compounds. The protein is 4-hydroxybenzoyl-CoA reductase subunit alpha (hcrA) of Thauera aromatica.